The primary structure comprises 103 residues: Large ribosomal subunit protein bL21 (103 aa).

The protein belongs to the bacterial ribosomal protein bL21 family. As to quaternary structure, part of the 50S ribosomal subunit. Contacts protein L20.

Its function is as follows. This protein binds to 23S rRNA in the presence of protein L20. The polypeptide is Large ribosomal subunit protein bL21 (Pectobacterium carotovorum subsp. carotovorum (strain PC1)).